A 453-amino-acid polypeptide reads, in one-letter code: MSFDLIIKNGTVILENEARVVDIAVKGGKIAAIGQDLGDAKEVMDASGLVVSPGMVDAHTHISEPGRSHWEGYETGTRAAAKGGITTMIEMPLNQLPATVDRASIELKFDAAKGKLTIDAAQLGGLVSYNIDRLHELDEVGVVGFKCFVATCGDRGIDNDFRDVNDWQFFKGAQKLGELGQPVLVHCENALICDALGEEAKREGRVTAHDYVASRPVFTEVEAIRRVLYLAKVAGCRLHVCHISSPEGVEEVTRARQEGQDVTCESCPHYFVLDTDQFEEIGTLAKCSPPIRDLENQKGMWEKLFNGEIDCLVSDHSPCPPEMKAGNIMEAWGGIAGLQNCMDVMFDEAVQKRGMSLPMFGKLMATNAADIFGLQQKGRIAPGKDADFVFIQPNSSYVLTNDDLEYRHKVSPYVGRTIGARITKTILRGDVIYDIEQGFPVAPKGQFILKHQQ.

Zn(2+) is bound by residues H59, H61, K146, H186, H242, and D315. K146 is modified (N6-carboxylysine).

It belongs to the metallo-dependent hydrolases superfamily. Allantoinase family. Homotetramer. Zn(2+) serves as cofactor. Post-translationally, carboxylation allows a single lysine to coordinate two zinc ions.

The catalysed reaction is (S)-allantoin + H2O = allantoate + H(+). Its pathway is nitrogen metabolism; (S)-allantoin degradation; allantoate from (S)-allantoin: step 1/1. Its function is as follows. Catalyzes the conversion of allantoin (5-ureidohydantoin) to allantoic acid by hydrolytic cleavage of the five-member hydantoin ring. The sequence is that of Allantoinase from Escherichia coli (strain 55989 / EAEC).